Consider the following 506-residue polypeptide: Peptidyl-prolyl cis-trans isomerase CYP59 (506 aa).

One can recognise a PPIase cyclophilin-type domain in the interval 1–161; sequence MSVLIVTSLG…KNIRIKHTHI (161 aa). Positions 243 to 321 constitute an RRM domain; it reads NVLFVCKLNP…RRIHVDFSQS (79 aa). A CCHC-type zinc finger spans residues 341–357; the sequence is GCFKCGSTDHIAKDCVG. 2 stretches are compositionally biased toward basic and acidic residues: residues 388-404 and 412-506; these read ETPK…EKIQ and GEGK…RRDR. The interval 388 to 506 is disordered; that stretch reads ETPKHNSHER…REARHERRDR (119 aa).

It belongs to the cyclophilin-type PPIase family. As to quaternary structure, component of the BZR1 complex. Interacts with NRPB1 (via CTD domain), SCL28, SCL30, SCL30A, SCL33, SC35, SR30, SR34, RSZ21, RS2Z33, RS31 and RS40. As to expression, ubiquitous.

Its subcellular location is the nucleus. The catalysed reaction is [protein]-peptidylproline (omega=180) = [protein]-peptidylproline (omega=0). PPIases accelerate the folding of proteins. It catalyzes the cis-trans isomerization of proline imidic peptide bonds in oligopeptides. Influences somehow regulation of RNA pol II (CTD) phosphorylation. Binds RNA with preferences for GC-rich sequences. Probably involved in activities connecting transcription and pre-mRNA processing. Involved in brassinostroid response. In Arabidopsis thaliana (Mouse-ear cress), this protein is Peptidyl-prolyl cis-trans isomerase CYP59 (CYP59).